We begin with the raw amino-acid sequence, 365 residues long: Caffeic acid 3-O-methyltransferase (365 aa).

130–136 provides a ligand contact to substrate; that stretch reads MNQDKVL. Residues 162–180 are substrate binding; it reads AFDYHGTDPRFNKVFNKGM. 5 residues coordinate S-adenosyl-L-methionine: G208, D231, D251, M252, and K265. H269 acts as the Proton acceptor in catalysis.

Belongs to the class I-like SAM-binding methyltransferase superfamily. Cation-independent O-methyltransferase family. COMT subfamily. Homodimer.

It catalyses the reaction (E)-caffeate + S-adenosyl-L-methionine = (E)-ferulate + S-adenosyl-L-homocysteine + H(+). It functions in the pathway aromatic compound metabolism; phenylpropanoid biosynthesis. Its function is as follows. Catalyzes the conversion of caffeic acid to ferulic acid and of 5-hydroxyferulic acid to sinapic acid. The resulting products may subsequently be converted to the corresponding alcohols that are incorporated into lignins. The sequence is that of Caffeic acid 3-O-methyltransferase (COMT1) from Rosa chinensis (China rose).